Reading from the N-terminus, the 438-residue chain is Enolase 1 (438 aa).

The substrate site is built by histidine 160 and glutamate 169. The active-site Proton donor is the glutamate 212. Mg(2+)-binding residues include aspartate 247, glutamate 296, and aspartate 321. Substrate is bound by residues glutamate 296 and aspartate 321. The Proton acceptor role is filled by lysine 346. Substrate contacts are provided by residues 373–376 (SHRS) and lysine 397.

It belongs to the enolase family. Homodimer. Requires Mg(2+) as cofactor.

Its subcellular location is the cytoplasm. It catalyses the reaction (2R)-2-phosphoglycerate = phosphoenolpyruvate + H2O. Its pathway is carbohydrate degradation; glycolysis; pyruvate from D-glyceraldehyde 3-phosphate: step 4/5. The polypeptide is Enolase 1 (ENO1) (Candida glabrata (strain ATCC 2001 / BCRC 20586 / JCM 3761 / NBRC 0622 / NRRL Y-65 / CBS 138) (Yeast)).